Here is a 117-residue protein sequence, read N- to C-terminus: Hydrogenase maturation factor HypA (117 aa).

A Ni(2+)-binding site is contributed by histidine 2. Cysteine 73, cysteine 76, cysteine 90, and cysteine 93 together coordinate Zn(2+).

This sequence belongs to the HypA/HybF family.

Functionally, involved in the maturation of [NiFe] hydrogenases. Required for nickel insertion into the metal center of the hydrogenase. In Pectobacterium atrosepticum (strain SCRI 1043 / ATCC BAA-672) (Erwinia carotovora subsp. atroseptica), this protein is Hydrogenase maturation factor HypA.